A 97-amino-acid polypeptide reads, in one-letter code: Glutamyl-tRNA(Gln) amidotransferase subunit C (97 aa).

This sequence belongs to the GatC family. Heterotrimer of A, B and C subunits.

It catalyses the reaction L-glutamyl-tRNA(Gln) + L-glutamine + ATP + H2O = L-glutaminyl-tRNA(Gln) + L-glutamate + ADP + phosphate + H(+). The catalysed reaction is L-aspartyl-tRNA(Asn) + L-glutamine + ATP + H2O = L-asparaginyl-tRNA(Asn) + L-glutamate + ADP + phosphate + 2 H(+). In terms of biological role, allows the formation of correctly charged Asn-tRNA(Asn) or Gln-tRNA(Gln) through the transamidation of misacylated Asp-tRNA(Asn) or Glu-tRNA(Gln) in organisms which lack either or both of asparaginyl-tRNA or glutaminyl-tRNA synthetases. The reaction takes place in the presence of glutamine and ATP through an activated phospho-Asp-tRNA(Asn) or phospho-Glu-tRNA(Gln). The chain is Glutamyl-tRNA(Gln) amidotransferase subunit C from Sulfurisphaera tokodaii (strain DSM 16993 / JCM 10545 / NBRC 100140 / 7) (Sulfolobus tokodaii).